The sequence spans 126 residues: Putative regulator AldR (126 aa).

Belongs to the RutC family.

Its function is as follows. Implicated in the regulation of isoleucine biosynthesis. In Lactococcus lactis subsp. lactis (strain IL1403) (Streptococcus lactis), this protein is Putative regulator AldR (aldR).